The following is a 138-amino-acid chain: Acidic phospholipase A2 (138 aa).

The first 16 residues, Met1 to Gly16, serve as a signal peptide directing secretion. 7 disulfides stabilise this stretch: Cys42–Cys131, Cys44–Cys60, Cys59–Cys111, Cys65–Cys138, Cys66–Cys104, Cys73–Cys97, and Cys91–Cys102. Positions 43, 45, and 47 each coordinate Ca(2+). Residue His63 is part of the active site. Asp64 contacts Ca(2+). Residue Asp105 is part of the active site.

Belongs to the phospholipase A2 family. Group II subfamily. D49 sub-subfamily. As to quaternary structure, homodimer. Ca(2+) is required as a cofactor. Expressed by the venom gland.

The protein resides in the secreted. It carries out the reaction a 1,2-diacyl-sn-glycero-3-phosphocholine + H2O = a 1-acyl-sn-glycero-3-phosphocholine + a fatty acid + H(+). Functionally, PLA2 catalyzes the calcium-dependent hydrolysis of the 2-acyl groups in 3-sn-phosphoglycerides. This Crotalus atrox (Western diamondback rattlesnake) protein is Acidic phospholipase A2.